Reading from the N-terminus, the 145-residue chain is Large ribosomal subunit protein uL11 (145 aa).

The protein belongs to the universal ribosomal protein uL11 family. Part of the ribosomal stalk of the 50S ribosomal subunit. Interacts with L10 and the large rRNA to form the base of the stalk. L10 forms an elongated spine to which L12 dimers bind in a sequential fashion forming a multimeric L10(L12)X complex. Post-translationally, one or more lysine residues are methylated.

Its function is as follows. Forms part of the ribosomal stalk which helps the ribosome interact with GTP-bound translation factors. The chain is Large ribosomal subunit protein uL11 from Francisella philomiragia subsp. philomiragia (strain ATCC 25017 / CCUG 19701 / FSC 153 / O#319-036).